The chain runs to 255 residues: Pyrroloquinoline-quinone synthase (255 aa).

The protein belongs to the PqqC family.

The catalysed reaction is 6-(2-amino-2-carboxyethyl)-7,8-dioxo-1,2,3,4,7,8-hexahydroquinoline-2,4-dicarboxylate + 3 O2 = pyrroloquinoline quinone + 2 H2O2 + 2 H2O + H(+). It participates in cofactor biosynthesis; pyrroloquinoline quinone biosynthesis. Its function is as follows. Ring cyclization and eight-electron oxidation of 3a-(2-amino-2-carboxyethyl)-4,5-dioxo-4,5,6,7,8,9-hexahydroquinoline-7,9-dicarboxylic-acid to PQQ. This chain is Pyrroloquinoline-quinone synthase, found in Granulibacter bethesdensis (strain ATCC BAA-1260 / CGDNIH1).